A 365-amino-acid polypeptide reads, in one-letter code: PDZ and LIM domain protein 3 (365 aa).

The region spanning 1 to 84 (MPQNVILPGP…QLCLKIDRAE (84 aa)) is the PDZ domain. Residue serine 18 is modified to Phosphoserine. The segment at 126-156 (FIIPGRSSGCSTPSGIDGGSGRSTPSSVSTL) is disordered. The span at 147-156 (RSTPSSVSTL) shows a compositional bias: polar residues. The LIM zinc-binding domain maps to 293–352 (PLCDKCGSGIVGAVVKARDKYRHPECFVCADCNLNLKQKGYFFVEGELYCETHARARMRP).

Interacts with ACTN2. Forms a heterodimer with PDLIM4 (via LIM domain).

Its subcellular location is the cytoplasm. It localises to the myofibril. The protein localises to the sarcomere. The protein resides in the z line. Functionally, may play a role in the organization of actin filament arrays within muscle cells. The protein is PDZ and LIM domain protein 3 (PDLIM3) of Sus scrofa (Pig).